Here is a 178-residue protein sequence, read N- to C-terminus: Small ribosomal subunit protein uS5 (178 aa).

The 64-residue stretch at 17–80 folds into the S5 DRBM domain; the sequence is FEERIVEIRR…AAARASVVEI (64 aa).

It belongs to the universal ribosomal protein uS5 family. In terms of assembly, part of the 30S ribosomal subunit. Contacts proteins S4 and S8.

Its function is as follows. With S4 and S12 plays an important role in translational accuracy. Functionally, located at the back of the 30S subunit body where it stabilizes the conformation of the head with respect to the body. The sequence is that of Small ribosomal subunit protein uS5 from Pseudothermotoga lettingae (strain ATCC BAA-301 / DSM 14385 / NBRC 107922 / TMO) (Thermotoga lettingae).